The primary structure comprises 358 residues: L-lysine 3-hydroxylase (358 aa).

Fe cation is bound by residues His-178, Glu-180, and His-314. Arg-328 contributes to the 2-oxoglutarate binding site.

This sequence belongs to the clavaminate synthase family. It depends on Fe(2+) as a cofactor.

The catalysed reaction is L-lysine + 2-oxoglutarate + O2 = (3S)-3-hydroxy-L-lysine + succinate + CO2. Its function is as follows. Alpha-ketoglutarate-dependent dioxygenase that in vitro catalyzes the regio- and stereoselective hydroxylation of L-lysine, leading to (3S)-3-hydroxy-L-lysine. Can also use (5R)-5-hydroxy-L-lysine as substrate, but neither D-lysine nor L-ornithine. The protein is L-lysine 3-hydroxylase of Catenulispora acidiphila (strain DSM 44928 / JCM 14897 / NBRC 102108 / NRRL B-24433 / ID139908).